A 353-amino-acid polypeptide reads, in one-letter code: Photosystem II protein D1 (353 aa).

T2 carries the N-acetylthreonine modification. Phosphothreonine is present on T2. 3 consecutive transmembrane segments (helical) span residues 29 to 46, 118 to 133, and 142 to 156; these read YIGW…TATS, HFLL…EWEL, and WIAV…AATA. H118 contacts chlorophyll a. Y126 is a pheophytin a binding site. Residues D170 and E189 each contribute to the [CaMn4O5] cluster site. A helical transmembrane segment spans residues 197-218; it reads FHMLGVAGVFGGSLFSAMHGSL. H198 provides a ligand contact to chlorophyll a. A quinone is bound by residues H215 and 264–265; that span reads SF. H215 lines the Fe cation pocket. Fe cation is bound at residue H272. The helical transmembrane segment at 274 to 288 threads the bilayer; sequence FLAAWPVVCIWFTAL. The [CaMn4O5] cluster site is built by H332, E333, D342, and A344. Residues 345–353 constitute a propeptide that is removed on maturation; sequence SVDAPAVQG.

This sequence belongs to the reaction center PufL/M/PsbA/D family. PSII is composed of 1 copy each of membrane proteins PsbA, PsbB, PsbC, PsbD, PsbE, PsbF, PsbH, PsbI, PsbJ, PsbK, PsbL, PsbM, PsbT, PsbX, PsbY, PsbZ, Psb30/Ycf12, at least 3 peripheral proteins of the oxygen-evolving complex and a large number of cofactors. It forms dimeric complexes. It depends on The D1/D2 heterodimer binds P680, chlorophylls that are the primary electron donor of PSII, and subsequent electron acceptors. It shares a non-heme iron and each subunit binds pheophytin, quinone, additional chlorophylls, carotenoids and lipids. D1 provides most of the ligands for the Mn4-Ca-O5 cluster of the oxygen-evolving complex (OEC). There is also a Cl(-1) ion associated with D1 and D2, which is required for oxygen evolution. The PSII complex binds additional chlorophylls, carotenoids and specific lipids. as a cofactor. Post-translationally, tyr-161 forms a radical intermediate that is referred to as redox-active TyrZ, YZ or Y-Z. C-terminally processed by CTPA; processing is essential to allow assembly of the oxygen-evolving complex and thus photosynthetic growth.

Its subcellular location is the plastid. The protein resides in the chloroplast thylakoid membrane. The enzyme catalyses 2 a plastoquinone + 4 hnu + 2 H2O = 2 a plastoquinol + O2. In terms of biological role, photosystem II (PSII) is a light-driven water:plastoquinone oxidoreductase that uses light energy to abstract electrons from H(2)O, generating O(2) and a proton gradient subsequently used for ATP formation. It consists of a core antenna complex that captures photons, and an electron transfer chain that converts photonic excitation into a charge separation. The D1/D2 (PsbA/PsbD) reaction center heterodimer binds P680, the primary electron donor of PSII as well as several subsequent electron acceptors. This Nephroselmis olivacea (Green alga) protein is Photosystem II protein D1.